Here is a 164-residue protein sequence, read N- to C-terminus: IQ domain-containing protein F2 (164 aa).

IQ domains lie at 43 to 72 (RTKA…RAWI) and 99 to 128 (RERA…AIYI).

This Homo sapiens (Human) protein is IQ domain-containing protein F2 (IQCF2).